The following is a 213-amino-acid chain: ATP-dependent Clp protease proteolytic subunit (213 aa).

S114 acts as the Nucleophile in catalysis. The active site involves H139.

It belongs to the peptidase S14 family. As to quaternary structure, fourteen ClpP subunits assemble into 2 heptameric rings which stack back to back to give a disk-like structure with a central cavity, resembling the structure of eukaryotic proteasomes.

The protein localises to the cytoplasm. The enzyme catalyses Hydrolysis of proteins to small peptides in the presence of ATP and magnesium. alpha-casein is the usual test substrate. In the absence of ATP, only oligopeptides shorter than five residues are hydrolyzed (such as succinyl-Leu-Tyr-|-NHMec, and Leu-Tyr-Leu-|-Tyr-Trp, in which cleavage of the -Tyr-|-Leu- and -Tyr-|-Trp bonds also occurs).. Functionally, cleaves peptides in various proteins in a process that requires ATP hydrolysis. Has a chymotrypsin-like activity. Plays a major role in the degradation of misfolded proteins. This is ATP-dependent Clp protease proteolytic subunit from Pseudomonas entomophila (strain L48).